The primary structure comprises 1254 residues: Zinc finger protein BRUTUS (1254 aa).

A disordered region spans residues 1–40 (MATPLPDFETARGGGAVASSSTTVLPSSVSSSSSSSRPLP). A compositionally biased stretch (low complexity) spans 19 to 40 (SSSTTVLPSSVSSSSSSSRPLP). Residues 201-221 (FLCSIPVNMLAVFLPWISSSI) traverse the membrane as a helical segment. The tract at residues 893–913 (GSPDSSSTETSKPSPQKDNDH) is disordered. A compositionally biased stretch (polar residues) spans 895–906 (PDSSSTETSKPS). The CHY-type zinc-finger motif lies at 999 to 1068 (PEKQIYGCEH…PICTTPSCDG (70 aa)). Zn(2+) is bound by residues Cys-1006, His-1008, Cys-1019, Cys-1020, Cys-1026, Cys-1029, His-1030, His-1036, Cys-1048, Cys-1051, Cys-1061, Cys-1066, Cys-1076, Cys-1079, His-1090, Cys-1091, Cys-1094, Cys-1097, His-1109, Cys-1110, Cys-1113, Cys-1116, His-1124, and Cys-1126. A CTCHY-type zinc finger spans residues 1071-1134 (MAKHYCSICK…KCLEKSLETN (64 aa)). An RING-type; atypical zinc finger spans residues 1135-1176 (CPICCEFLFTSSEAVRALPCGHYMHSACFQAYTCSHYTCPIC).

Interacts with the PYEL proteins bHLH115, bHLH104 and ILR3 in the nucleus. Binds zinc and iron ions. Expressed in cotyledons of seedlings, young leaves, developing and mature embryos, and other reproductive tissues including floral vasculature, funiculus, septum, and gynoecium valves.

The protein localises to the membrane. It localises to the nucleus. It participates in protein modification; protein ubiquitination. Its function is as follows. Essential protein. Negatively regulates the response to iron deficiency and thus contributes to iron homeostasis. Exhibits E3 ubiquitin-protein ligase activity in vitro. Plays a role in root growth, rhizosphere acidification, and iron reductase activity in response to iron deprivation. Facilitates 26S proteasome-mediated degradation of PYEL proteins in the absence of iron. This Arabidopsis thaliana (Mouse-ear cress) protein is Zinc finger protein BRUTUS.